The following is a 339-amino-acid chain: Replication factor C subunit 4 (339 aa).

Position 49 to 56 (49 to 56) interacts with ATP; sequence GPPGTGKT.

It belongs to the activator 1 small subunits family. Heterotetramer of subunits RFC2, RFC3, RFC4 and RFC5 that can form a complex with RFC1.

Its subcellular location is the nucleus. Functionally, may be involved in DNA replication and thus regulate cell proliferation. The sequence is that of Replication factor C subunit 4 (RFC4) from Arabidopsis thaliana (Mouse-ear cress).